A 496-amino-acid chain; its full sequence is MADESETAVKPPAPPLPQMMEGNGNGHEHCSDCENEEDNSYNRGGLSPANDTGAKKKKKKQKKKKEKGSETDSAQDQPVKMNSLPAERIQEIQKAIELFSVGQGPAKTMEEASKRSYQFWDTQPVPKLGEVVNTHGPVEPDKDNIRQEPYTLPQGFTWDALDLGDRGVLKELYTLLNENYVEDDDNMFRFDYSPEFLLWALRPPGWLPQWHCGVRVVSSRKLVGFISAIPANIHIYDTEKKMVEINFLCVHKKLRSKRVAPVLIREITRRVHLEGIFQAVYTAGVVLPKPVGTCRYWHRSLNPRKLIEVKFSHLSRNMTMQRTMKLYRLPETPKTAGLRPMETKDIPVVHQLLTRYLKQFHLTPVMSQEEVEHWFYPQENIIDTFVVENANGEVTDFLSFYTLPSTIMNHPTHKSLKAAYSFYNVHTQTPLLDLMSDALVLAKMKGFDVFNALDLMENKTFLEKLKFGIGDGNLQYYLYNWKCPSMGAEKVGLVLQ.

Positions Met-1–Asn-82 are disordered. Phosphoserine occurs at positions 31 and 47. The span at Lys-55–Glu-66 shows a compositional bias: basic residues. At Ser-83 the chain carries Phosphoserine. Residues Gln-118, Phe-119, Trp-120, Phe-247, Leu-248, Cys-249, Val-250, Ser-256, Arg-258, Val-259, and Ala-260 each contribute to the tetradecanoyl-CoA site.

The protein belongs to the NMT family. In terms of tissue distribution, heart, gut, kidney, liver and placenta.

It is found in the cytoplasm. The protein localises to the cytosol. Its subcellular location is the membrane. The catalysed reaction is N-terminal glycyl-[protein] + tetradecanoyl-CoA = N-tetradecanoylglycyl-[protein] + CoA + H(+). The enzyme catalyses N-terminal glycyl-L-lysyl-[protein] + tetradecanoyl-CoA = N-terminal glycyl-(N(6)-tetradecanoyl)-L-lysyl-[protein] + CoA + H(+). In terms of biological role, adds a myristoyl group to the N-terminal glycine residue of certain cellular and viral proteins. Also able to mediate N-terminal lysine myristoylation of proteins: catalyzes myristoylation of ARF6 on both 'Gly-2' and 'Lys-3'. Lysine myristoylation is required to maintain ARF6 on membranes during the GTPase cycle. In Homo sapiens (Human), this protein is Glycylpeptide N-tetradecanoyltransferase 1.